The sequence spans 562 residues: MSENKVLSDLEIAHNATMLPVEAIAERAGINVDALELYGPYKAKINTAKLVLPRGKAPGKVVLVSAMSPTPAGEGKSTTTVGLADSLARAGHKVMIALREPSLGPILGMKGGATGGGYSQVLPMDDINLHFTGDFHAITSANNALMALVDNHIFQGNQLGIDPRRMTFKRVLDMNDRALREVVIGLGGPMQGVPRQDGFDITVASEIMAVFCLATDLDDLRERLGRITFGYTYDRTPVTVSDLGVEGALTMLLKDAIKPNLVQTIAGTPALVHGGPFANIAHGCNSLIATSTAMQLADIVVTEAGFGADLGAEKYMDIKARIAEVAPSAVVVVATIRALKMQGGVPKEKLNEPNVEAVAAGVENLKRHVGNVAKFGISPVVSINKFGSDTPEELEWLLAWCAAEGVEAAVADVWGRGGGGDGGDELAAKVAAALEAPSNFHHLYPLELGVEDKIRTIVQEIYGADGVEFSVPALKRLAEIEKNGWSGLPVCMAKTQYSFTDDASRLGAPKGFRVHVRELIPKTGAGFIVALTGAVMTMPGLPKEPAAMRMDVDADGNPTGLF.

70–77 (TPAGEGKS) serves as a coordination point for ATP.

It belongs to the formate--tetrahydrofolate ligase family.

The catalysed reaction is (6S)-5,6,7,8-tetrahydrofolate + formate + ATP = (6R)-10-formyltetrahydrofolate + ADP + phosphate. The protein operates within one-carbon metabolism; tetrahydrofolate interconversion. The polypeptide is Formate--tetrahydrofolate ligase (Paenarthrobacter aurescens (strain TC1)).